A 2167-amino-acid chain; its full sequence is Papilin (2167 aa).

The first 19 residues, 1 to 19 (MRLLLFSAALLLCSVPTWA), serve as a signal peptide directing secretion. The 48-residue stretch at 76 to 123 (TGNWGPWVPENECSRSCGGGVQLEKRQCSGDCTGASVRYISCNLNACE) folds into the TSP type-1 1 domain. Intrachain disulfides connect C88–C117, C92–C122, and C103–C107. N-linked (GlcNAc...) asparagine glycosylation is present at N268. TSP type-1 domains lie at 341 to 402 (VDYM…VDCE), 404 to 459 (EWFT…TCNR), and 461 to 525 (ACPE…GPCE). 3 disulfides stabilise this stretch: C353–C396, C357–C401, and C368–C382. N386 and N445 each carry an N-linked (GlcNAc...) asparagine glycan. N541, N568, and N638 each carry an N-linked (GlcNAc...) asparagine glycan. TSP type-1 domains lie at 585-643 (CEYE…TNEE) and 645-702 (CTGT…DDCP). N-linked (GlcNAc...) asparagine glycosylation is found at N715, N729, N741, N814, N820, N857, N933, and N1090. 6 cysteine pairs are disulfide-bonded: C1089-C1141, C1099-C1124, C1116-C1137, C1150-C1202, C1161-C1185, and C1177-C1198. BPTI/Kunitz inhibitor domains follow at residues 1089 to 1141 (CNQT…ETIC) and 1150 to 1202 (CYLP…SMFC). The disordered stretch occupies residues 1239–1273 (QSAEQPQPQQPQQQQQQQQQQPQQPRQSMEDICRS). Residues 1243–1263 (QPQPQQPQQQQQQQQQQPQQP) show a composition bias toward low complexity. 3 disulfide bridges follow: C1271–C1321, C1280–C1304, and C1296–C1317. In terms of domain architecture, BPTI/Kunitz inhibitor 3 spans 1271–1321 (CRSRQDAGPCETYSDQWFYNAFSQECETFTYGGCGGNLNRFRSKDECEQRC). A disordered region spans residues 1332–1365 (ARQEQAQPAAQPAQPAQPSNIVSPPQQSASPVVV). 9 disulfide bridges follow: C1375–C1425, C1384–C1408, C1400–C1421, C1447–C1497, C1456–C1480, C1472–C1493, C1504–C1554, C1513–C1537, and C1529–C1550. BPTI/Kunitz inhibitor domains are found at residues 1375–1425 (CHLN…ESLC), 1447–1497 (CDEA…KAAC), and 1504–1554 (CQLP…QARC). The tract at residues 1556 to 1615 (KDDQTTTTSQPEELPSLPLVQEDPQPRPAFSLKQSFAHSRRRDAPFARSVSARHHTPDSE) is disordered. Disulfide bonds link C1621-C1671, C1630-C1654, C1646-C1667, C1731-C1781, C1740-C1764, C1756-C1777, C1790-C1840, C1799-C1823, and C1815-C1836. 3 BPTI/Kunitz inhibitor domains span residues 1621 to 1671 (CYAV…ETSC), 1731 to 1781 (CMLP…ERAC), and 1790 to 1840 (CELP…ESLC). Residue N1848 is glycosylated (N-linked (GlcNAc...) asparagine). 6 disulfide bridges follow: C1853–C1903, C1862–C1886, C1878–C1899, C1914–C1964, C1923–C1947, and C1939–C1960. BPTI/Kunitz inhibitor domains lie at 1853–1903 (CTLE…QQSC) and 1914–1964 (CTLR…FRRC). N1992, N2087, and N2133 each carry an N-linked (GlcNAc...) asparagine glycan. The disordered stretch occupies residues 2075–2106 (RTTSRPMLTPSKNFSLGTPPTPSPSTVSTTPF). Positions 2078–2090 (SRPMLTPSKNFSL) are enriched in polar residues. A PLAC domain is found at 2124-2163 (TSNSCMDVGNASTCDLIVKNGLCGKKRYGTFCCHTCTRVH).

Belongs to the papilin family. In terms of tissue distribution, localizes to the basement membranes of the gonad primordium, pharynx and intestine (at protein level). Expressed in head and CAN neurons, coelomocytes, body-wall muscles and anal depressor and sphincter and stomatointestinal muscles. Expressed Isoform a: is expressed in body wall muscles and distal cell tips. Isoform b: expressed in embryonic muscles.

The protein localises to the secreted. It is found in the extracellular space. Its subcellular location is the extracellular matrix. The protein resides in the basement membrane. In terms of biological role, involved in pharynx morphogenesis probably by remodeling the basement membrane. Its function is as follows. Plays a role in embryogenesis, the second phase of distal cell tip migration and is required for distribution of the metalloproteinase, mig-17, during organogenesis. Plays a role in post embryonic distal cell tip migration. Essential extracellular matrix (ECM) protein required for hypodermal enclosure in the embryo. This chain is Papilin (mig-6), found in Caenorhabditis elegans.